A 197-amino-acid chain; its full sequence is Probable chorismate pyruvate-lyase (197 aa).

Positions 66, 104, and 169 each coordinate substrate.

This sequence belongs to the UbiC family.

Its subcellular location is the cytoplasm. It catalyses the reaction chorismate = 4-hydroxybenzoate + pyruvate. Its pathway is cofactor biosynthesis; ubiquinone biosynthesis. Removes the pyruvyl group from chorismate, with concomitant aromatization of the ring, to provide 4-hydroxybenzoate (4HB) for the ubiquinone pathway. The chain is Probable chorismate pyruvate-lyase from Albidiferax ferrireducens (strain ATCC BAA-621 / DSM 15236 / T118) (Rhodoferax ferrireducens).